A 38-amino-acid polypeptide reads, in one-letter code: Cytochrome b559 subunit beta (38 aa).

A helical membrane pass occupies residues 13-29 (WLAVHALAVPTVFFLGS). His17 contacts heme.

Belongs to the PsbE/PsbF family. As to quaternary structure, heterodimer of an alpha subunit and a beta subunit. PSII is composed of 1 copy each of membrane proteins PsbA, PsbB, PsbC, PsbD, PsbE, PsbF, PsbH, PsbI, PsbJ, PsbK, PsbL, PsbM, PsbT, PsbX, PsbY, PsbZ, Psb30/Ycf12, at least 3 peripheral proteins of the oxygen-evolving complex and a large number of cofactors. It forms dimeric complexes. Heme b serves as cofactor.

It is found in the plastid. The protein resides in the chloroplast thylakoid membrane. This b-type cytochrome is tightly associated with the reaction center of photosystem II (PSII). PSII is a light-driven water:plastoquinone oxidoreductase that uses light energy to abstract electrons from H(2)O, generating O(2) and a proton gradient subsequently used for ATP formation. It consists of a core antenna complex that captures photons, and an electron transfer chain that converts photonic excitation into a charge separation. The chain is Cytochrome b559 subunit beta from Ostreococcus tauri.